Consider the following 453-residue polypeptide: uncharacterized protein (453 aa).

Positions 5–63 constitute a TRAM domain; that stretch reads LLKKNQSIELTIEDLTHDGSGVGKIDGYPLFIPNTLPGEKVTAKIIKLNKNYGFARMEN. [4Fe-4S] cluster-binding residues include C76, C82, C85, and C162. Positions 285, 314, 335, and 383 each coordinate S-adenosyl-L-methionine. C410 acts as the Nucleophile in catalysis.

The protein belongs to the class I-like SAM-binding methyltransferase superfamily. RNA M5U methyltransferase family.

This is an uncharacterized protein from Listeria monocytogenes serotype 4b (strain F2365).